A 342-amino-acid chain; its full sequence is Arginase 1, mitochondrial (342 aa).

Residues 1-22 constitute a mitochondrion transit peptide; the sequence is MSRIIGRKGINYIHRLNSASFT. Residues serine 77 and 96–99 each bind L-ornithine; that span reads GSTN. 4 residues coordinate Mn(2+): histidine 161, aspartate 185, histidine 187, and aspartate 189. 189–191 lines the L-ornithine pocket; that stretch reads DIY. 195–197 contacts substrate; the sequence is EGN. Residue serine 224 coordinates L-ornithine. Mn(2+) contacts are provided by aspartate 270 and aspartate 272. Glutamate 313 lines the substrate pocket.

It belongs to the arginase family. Forms homohexamers. The cofactor is Mn(2+). In terms of tissue distribution, expressed in vasculature of roots, root tips, cotyledons, leaves, cauline leaves, stems, sepals and pollen.

It localises to the mitochondrion. It catalyses the reaction L-arginine + H2O = urea + L-ornithine. It carries out the reaction agmatine + H2O = urea + putrescine. Its pathway is nitrogen metabolism; urea cycle; L-ornithine and urea from L-arginine: step 1/1. It participates in amine and polyamine biosynthesis; putrescine biosynthesis via agmatine pathway; putrescine from agmatine: step 1/1. In terms of biological role, catalyzes the hydrolysis of L-arginine to urea and L-ornithine. The latter can be utilized in the urea cycle or as a precursor for the synthesis of both polyamines and proline. Possesses agmatinase activity. Catalyzes the formation of putrescine from agmatine. The protein is Arginase 1, mitochondrial of Arabidopsis thaliana (Mouse-ear cress).